The following is a 181-amino-acid chain: Shikimate kinase 2 (181 aa).

An ATP-binding site is contributed by 12–17 (GCGKTT). The Mg(2+) site is built by threonine 16 and aspartate 32. Residues aspartate 34, arginine 58, and glycine 79 each contribute to the substrate site. Residues 112 to 126 (EAEPEADLRPTLTGK) form an LID domain region. Arginine 120 contacts ATP. Arginine 139 contributes to the substrate binding site.

The protein belongs to the shikimate kinase family. AroL subfamily. In terms of assembly, monomer. It depends on Mg(2+) as a cofactor.

The protein localises to the cytoplasm. It carries out the reaction shikimate + ATP = 3-phosphoshikimate + ADP + H(+). It participates in metabolic intermediate biosynthesis; chorismate biosynthesis; chorismate from D-erythrose 4-phosphate and phosphoenolpyruvate: step 5/7. Its function is as follows. Catalyzes the specific phosphorylation of the 3-hydroxyl group of shikimic acid using ATP as a cosubstrate. This chain is Shikimate kinase 2, found in Salmonella enteritidis PT4 (strain P125109).